The sequence spans 951 residues: Zinc fingers and homeoboxes protein 3 (951 aa).

Residues 1-66 (MASKRKSTTP…SSTDGSALAN (66 aa)) form a disordered region. The segment at 1–107 (MASKRKSTTP…SEHTDFNKDP (107 aa)) is required for nuclear localization. Over residues 42-58 (PSEAPDASSEAAPNPSS) the composition is skewed to low complexity. 2 consecutive C2H2-type zinc fingers follow at residues 77-100 (YCCKECEFRSQDVTHFIGHMNSEH) and 109-132 (FVCTGCSFLAKNPEGLSLHNAKCH). A disordered region spans residues 227-252 (TFINGAAPGSQASAKSTKPPPAANGP). Residues 238–483 (ASAKSTKPPP…LLTACPSITS (246 aa)) are required for homodimerization and interaction with NFYA. A required for repressor activity region spans residues 299–497 (LSSIPTYNAA…DANIYKNKKS (199 aa)). 2 DNA-binding regions (homeobox) span residues 300 to 359 (SSIP…GISW) and 489 to 548 (ANIY…RNLK). The segment at 492 to 550 (YKNKKSHEQLSALKGSFCRNQFPGQSEVEHLTKVTGLSTREVRKWFSDRRYHCRNLKGS) is required for nuclear localization. The residue at position 599 (serine 599) is a Phosphoserine. Positions 607–666 (TPTKYKERAPEQLRVLENSFAQNPLPPEEELDRLRSETKMTRREIDGWFSERRKKVNTEE) form a DNA-binding region, homeobox 3. The span at 662–676 (VNTEETKKADGHMPK) shows a compositional bias: basic and acidic residues. The tract at residues 662–690 (VNTEETKKADGHMPKEEEEGAEQEGRDEE) is disordered. Acidic residues predominate over residues 677–690 (EEEEGAEQEGRDEE). Serine 703 and serine 718 each carry phosphoserine. DNA-binding regions (homeobox) lie at residues 759–818 (PSKV…KNGQ) and 830–889 (FPPG…TRAV). Positions 916-951 (SELSENSESWEPSAPEASSEPFDTSSPQSGRQLEAD) are disordered. Low complexity predominate over residues 919–936 (SENSESWEPSAPEASSEP). Phosphoserine occurs at positions 922 and 941. Positions 937–951 (FDTSSPQSGRQLEAD) are enriched in polar residues.

Belongs to the ZHX family. In terms of assembly, homodimer (via homeobox domain 1). Heterodimer with ZHX1 (via homeobox domain 1). Heterodimer with ZHX2 (via homeobox domain 1). Heterodimerization with ZHX1 is a prerequisite for repressor activity. Interacts with NFYA. Ubiquitously expressed.

The protein localises to the nucleus. Functionally, acts as a transcriptional repressor. Involved in the early stages of mesenchymal stem cell (MSC) osteogenic differentiation. Is a regulator of podocyte gene expression during primary glomerula disease. Binds to promoter DNA. The chain is Zinc fingers and homeoboxes protein 3 (Zhx3) from Mus musculus (Mouse).